A 400-amino-acid chain; its full sequence is Carnosine N-methyltransferase (400 aa).

The segment at 1–51 (MQRRQRAPPASQPAQDGGRSEDVEVQFSAGRLGSAAPAGPPARGTAEDEER) is disordered. The segment covering 28-44 (SAGRLGSAAPAGPPARG) has biased composition (low complexity). Positions 155, 158, 199, 220, 286, 287, and 303 each coordinate S-adenosyl-L-methionine. D307 is a carnosine binding site. An S-adenosyl-L-methionine-binding site is contributed by Y315. 2 residues coordinate carnosine: H338 and Y389.

This sequence belongs to the carnosine N-methyltransferase family. In terms of assembly, homodimer. Each monomer accommodates one molecule of carnosine in its active pocket, precisely anchoring the histidine imidazole ring such that only N1 is exposed and deprotonated for methylation.

The protein localises to the cytoplasm. It localises to the cytosol. Its subcellular location is the nucleus. The enzyme catalyses carnosine + S-adenosyl-L-methionine = anserine + S-adenosyl-L-homocysteine + H(+). Functionally, N-methyltransferase that catalyzes the formation of anserine (beta-alanyl-N(Pi)-methyl-L-histidine) from carnosine. Anserine, a methylated derivative of carnosine (beta-alanyl-L-histidine), is an abundant constituent of vertebrate skeletal muscles. Also methylates other L-histidine-containing di- and tripeptides such as Gly-Gly-His, Gly-His and homocarnosine (GABA-His). The polypeptide is Carnosine N-methyltransferase (Mus musculus (Mouse)).